A 98-amino-acid chain; its full sequence is uncharacterized protein (98 aa).

Positions Arg19–Lys31 are enriched in basic residues. The tract at residues Arg19 to Ser47 is disordered.

Belongs to the lymphocryptovirus BNLF2b family.

This is an uncharacterized protein from Homo sapiens (Human).